A 691-amino-acid polypeptide reads, in one-letter code: NADH-ubiquinone oxidoreductase 75 kDa subunit (691 aa).

In terms of domain architecture, 2Fe-2S ferredoxin-type spans 1–78; the sequence is MVNVFVDGLS…NMKIFTNTPL (78 aa). Positions 34, 45, 48, and 62 each coordinate [2Fe-2S] cluster. The 40-residue stretch at 78–117 folds into the 4Fe-4S His(Cys)3-ligated-type domain; sequence LVKKAREGVLEFLLVNHPLDCPICDQGGECDLQDLTMVYG. Positions 94, 98, 101, 107, 146, 149, 152, and 196 each coordinate [4Fe-4S] cluster. Residues 215 to 271 form the 4Fe-4S Mo/W bis-MGD-type domain; the sequence is LQSTESIDVSDAIGSNIRIDVRGSEIMRILPRLNEDVNEEWISDKARFCYDGLKRQR.

It belongs to the complex I 75 kDa subunit family. Complex I is composed of about 30 different subunits. It depends on [2Fe-2S] cluster as a cofactor. [4Fe-4S] cluster is required as a cofactor.

It localises to the mitochondrion inner membrane. The enzyme catalyses a ubiquinone + NADH + 5 H(+)(in) = a ubiquinol + NAD(+) + 4 H(+)(out). In terms of biological role, core subunit of the mitochondrial membrane respiratory chain NADH dehydrogenase (Complex I) that is believed to belong to the minimal assembly required for catalysis. Complex I functions in the transfer of electrons from NADH to the respiratory chain. The immediate electron acceptor for the enzyme is believed to be ubiquinone. This is the largest subunit of complex I and it is a component of the iron-sulfur (IP) fragment of the enzyme. It may form part of the active site crevice where NADH is oxidized. The sequence is that of NADH-ubiquinone oxidoreductase 75 kDa subunit (NAD11) from Reclinomonas americana.